The sequence spans 209 residues: Urease accessory protein UreG (209 aa).

18–25 (GPVGSGKT) lines the GTP pocket.

This sequence belongs to the SIMIBI class G3E GTPase family. UreG subfamily. In terms of assembly, homodimer. UreD, UreF and UreG form a complex that acts as a GTP-hydrolysis-dependent molecular chaperone, activating the urease apoprotein by helping to assemble the nickel containing metallocenter of UreC. The UreE protein probably delivers the nickel.

The protein resides in the cytoplasm. In terms of biological role, facilitates the functional incorporation of the urease nickel metallocenter. This process requires GTP hydrolysis, probably effectuated by UreG. The chain is Urease accessory protein UreG from Cupriavidus necator (strain ATCC 17699 / DSM 428 / KCTC 22496 / NCIMB 10442 / H16 / Stanier 337) (Ralstonia eutropha).